The primary structure comprises 508 residues: Glycerol kinase (508 aa).

Position 14 (threonine 14) interacts with ADP. ATP contacts are provided by threonine 14, threonine 15, and serine 16. Threonine 14 contacts sn-glycerol 3-phosphate. Arginine 18 serves as a coordination point for ADP. Sn-glycerol 3-phosphate is bound by residues arginine 84, glutamate 85, and tyrosine 136. Residues arginine 84, glutamate 85, and tyrosine 136 each contribute to the glycerol site. Position 232 is a phosphohistidine; by HPr (histidine 232). Aspartate 246 provides a ligand contact to sn-glycerol 3-phosphate. Glycerol-binding residues include aspartate 246 and glutamine 247. Residues threonine 268 and glycine 311 each coordinate ADP. Positions 268, 311, 315, and 412 each coordinate ATP. Glycine 412 and asparagine 416 together coordinate ADP.

The protein belongs to the FGGY kinase family. As to quaternary structure, homotetramer and homodimer (in equilibrium). In terms of processing, the phosphoenolpyruvate-dependent sugar phosphotransferase system (PTS), including enzyme I, and histidine-containing protein (HPr) are required for the phosphorylation, which leads to the activation of the enzyme.

It catalyses the reaction glycerol + ATP = sn-glycerol 3-phosphate + ADP + H(+). Its pathway is polyol metabolism; glycerol degradation via glycerol kinase pathway; sn-glycerol 3-phosphate from glycerol: step 1/1. Activated by phosphorylation and inhibited by fructose 1,6-bisphosphate (FBP). Functionally, key enzyme in the regulation of glycerol uptake and metabolism. Catalyzes the phosphorylation of glycerol to yield sn-glycerol 3-phosphate. The chain is Glycerol kinase from Streptococcus pyogenes serotype M3 (strain ATCC BAA-595 / MGAS315).